Reading from the N-terminus, the 94-residue chain is MDPRYWGSSFWIVIFIIITKFKHDIETCKRHLYNICKALPCAECKDHALQAIQKNNIMSSNDINYIYFFFISLYNNLVFNPERCIDIKKVKKLI.

The ERV/ALR sulfhydryl oxidase domain maps to 1–94 (MDPRYWGSSF…IDIKKVKKLI (94 aa)). A disulfide bridge connects residues Cys41 and Cys44.

Belongs to the poxviruses E10 family. The cofactor is FAD.

It catalyses the reaction 2 R'C(R)SH + O2 = R'C(R)S-S(R)CR' + H2O2. Its function is as follows. FAD-dependent sulfhydryl oxidase that catalyzes disulfide bond formation. This chain is Probable FAD-linked sulfhydryl oxidase FPV093, found in Fowlpox virus (strain NVSL) (FPV).